A 244-amino-acid polypeptide reads, in one-letter code: Trypsin (244 aa).

The signal sequence occupies residues 1–15 (MKFLVILVLLGAAVA). The propeptide at 16-21 (FEDDDK) is activation peptide. The Peptidase S1 domain maps to 22 to 242 (IVGGFTCAKN…FVTWIQSTIS (221 aa)). 6 disulfide bridges follow: Cys28-Cys158, Cys46-Cys62, Cys130-Cys231, Cys137-Cys204, Cys169-Cys183, and Cys194-Cys218. Catalysis depends on His61, which acts as the Charge relay system. Positions 73, 75, and 83 each coordinate Ca(2+). Catalysis depends on Asp105, which acts as the Charge relay system. Ser198 (charge relay system) is an active-site residue.

This sequence belongs to the peptidase S1 family. Ca(2+) serves as cofactor.

The protein localises to the secreted. It is found in the extracellular space. The enzyme catalyses Preferential cleavage: Arg-|-Xaa, Lys-|-Xaa.. The polypeptide is Trypsin (Xenopus laevis (African clawed frog)).